The primary structure comprises 499 residues: MSQLEHNIGLSIFEPVAKHRANRIVCTIGPSTQSVEALKNLMKSGMSVARMNFSHGSHEYHQTTINNVRAAAAELGLHIGIALDTKGPEIRTGLFKDGEVSFAPGDIVCVTTDPAYEKVGTKEKFYIDYPQLTNAVRPGGSIYVDDGVMTLRVVSKEDDRTLKCHVNNHHRLTDRRGINLPGCEVDLPAVSEKDRKDLEFGVAQGVDMIFASFIRTAEQVREVRAALGEKGKDILIISKIENHQGVQNIDSIIEASNGIMVARGDLGVEIPAEKVCVAQMCIISKCNVVGKPVICATQMLESMTSNPRPTRAEVSDVANAVLNGADCVMLSGETAKGKYPNEVVQYMARICVEAQSATHDTVMFNSIKNLQKIPMCPEEAVCSSAVASAFEVQAKAMLVLSNTGRSARLISKYRPNCPIICVTTRLQTCRQLNVTRSVVSVFYDAAKSGEDKDKEKRVKLGLDFAKKEKYASTGDVVVVVHADHSVKGYPNQTRLIYLP.

Residue Arg-50 participates in substrate binding. K(+)-binding residues include Asn-52, Ser-54, Asp-84, and Thr-85. 52 to 55 (NFSH) is an ATP binding site. Arg-91 lines the ATP pocket. Mg(2+) is bound at residue Glu-241. Positions 264, 265, and 297 each coordinate substrate. Position 265 (Asp-265) interacts with Mg(2+).

The protein belongs to the pyruvate kinase family. In terms of assembly, homotetramer. It depends on Mg(2+) as a cofactor. Requires K(+) as cofactor.

The catalysed reaction is pyruvate + ATP = phosphoenolpyruvate + ADP + H(+). The protein operates within carbohydrate degradation; glycolysis; pyruvate from D-glyceraldehyde 3-phosphate: step 5/5. With respect to regulation, activated by fructose 2,6-bisphosphate, activated by the effector in a cooperative manner. The protein is Pyruvate kinase 1 (PYK1) of Trypanosoma brucei brucei.